A 361-amino-acid polypeptide reads, in one-letter code: S-adenosylmethionine decarboxylase proenzyme (361 aa).

Catalysis depends on residues E13 and E16. S73 acts as the Schiff-base intermediate with substrate; via pyruvic acid in catalysis. S73 is subject to Pyruvic acid (Ser); by autocatalysis. Catalysis depends on C87, which acts as the Proton donor; for catalytic activity. Catalysis depends on proton acceptor; for processing activity residues S236 and H249.

Belongs to the eukaryotic AdoMetDC family. Pyruvate serves as cofactor. In terms of processing, is synthesized initially as an inactive proenzyme. Formation of the active enzyme involves a self-maturation process in which the active site pyruvoyl group is generated from an internal serine residue via an autocatalytic post-translational modification. Two non-identical subunits are generated from the proenzyme in this reaction, and the pyruvate is formed at the N-terminus of the alpha chain, which is derived from the carboxyl end of the proenzyme. The post-translation cleavage follows an unusual pathway, termed non-hydrolytic serinolysis, in which the side chain hydroxyl group of the serine supplies its oxygen atom to form the C-terminus of the beta chain, while the remainder of the serine residue undergoes an oxidative deamination to produce ammonia and the pyruvoyl group blocking the N-terminus of the alpha chain.

The enzyme catalyses S-adenosyl-L-methionine + H(+) = S-adenosyl 3-(methylsulfanyl)propylamine + CO2. The protein operates within amine and polyamine biosynthesis; S-adenosylmethioninamine biosynthesis; S-adenosylmethioninamine from S-adenosyl-L-methionine: step 1/1. In Nicotiana tabacum (Common tobacco), this protein is S-adenosylmethionine decarboxylase proenzyme (SAMDC).